The sequence spans 455 residues: Argininosuccinate synthase (455 aa).

ATP-binding positions include 17-25 (AFSGGLDTS) and Ala43. Residue Tyr99 participates in L-citrulline binding. ATP contacts are provided by Gly129 and Thr131. L-aspartate is bound by residues Thr131, Asn135, and Asp136. Asn135 is an L-citrulline binding site. ATP is bound at residue Asp136. Arg139 and Ser192 together coordinate L-citrulline. Asp194 provides a ligand contact to ATP. Positions 201, 203, and 280 each coordinate L-citrulline. Polar residues predominate over residues 434 to 448 (TGLPQVDNNNLSSGR). The interval 434 to 455 (TGLPQVDNNNLSSGRGLQDKRQ) is disordered.

This sequence belongs to the argininosuccinate synthase family. Type 2 subfamily. As to quaternary structure, homotetramer.

The protein resides in the cytoplasm. It catalyses the reaction L-citrulline + L-aspartate + ATP = 2-(N(omega)-L-arginino)succinate + AMP + diphosphate + H(+). It functions in the pathway amino-acid biosynthesis; L-arginine biosynthesis; L-arginine from L-ornithine and carbamoyl phosphate: step 2/3. The protein is Argininosuccinate synthase (argG) of Yersinia pestis.